A 239-amino-acid chain; its full sequence is Peptidyl-tRNA hydrolase (239 aa).

Tyr-14 is a tRNA binding site. His-19 functions as the Proton acceptor in the catalytic mechanism. Residues Phe-64, Asn-66, and Asn-112 each coordinate tRNA.

It belongs to the PTH family. Monomer.

It localises to the cytoplasm. It catalyses the reaction an N-acyl-L-alpha-aminoacyl-tRNA + H2O = an N-acyl-L-amino acid + a tRNA + H(+). Its function is as follows. Hydrolyzes ribosome-free peptidyl-tRNAs (with 1 or more amino acids incorporated), which drop off the ribosome during protein synthesis, or as a result of ribosome stalling. In terms of biological role, catalyzes the release of premature peptidyl moieties from peptidyl-tRNA molecules trapped in stalled 50S ribosomal subunits, and thus maintains levels of free tRNAs and 50S ribosomes. The sequence is that of Peptidyl-tRNA hydrolase from Rhizobium meliloti (strain 1021) (Ensifer meliloti).